We begin with the raw amino-acid sequence, 206 residues long: dCTP deaminase, dUMP-forming (206 aa).

Residues 117–122 (RSSFGR), D135, 143–145 (TLE), Q163, Y177, K184, and Q188 contribute to the dCTP site. The active-site Proton donor/acceptor is the E145.

Belongs to the dCTP deaminase family. Homotrimer.

The enzyme catalyses dCTP + 2 H2O = dUMP + NH4(+) + diphosphate. It participates in pyrimidine metabolism; dUMP biosynthesis; dUMP from dCTP: step 1/1. Its function is as follows. Bifunctional enzyme that catalyzes both the deamination of dCTP to dUTP and the hydrolysis of dUTP to dUMP without releasing the toxic dUTP intermediate. This Methanococcus maripaludis (strain C5 / ATCC BAA-1333) protein is dCTP deaminase, dUMP-forming.